Consider the following 48-residue polypeptide: MKNSKDILNNAIEEVSEKELMEVAGGKRGSGWIATITDDCPNSVFVCC.

A propeptide spanning residues 1–26 is cleaved from the precursor; that stretch reads MKNSKDILNNAIEEVSEKELMEVAGG. Cross-links (beta-methyllanthionine (Thr-Cys)) lie at residues 35 to 40 and 37 to 47; these read TITDDC and TDDCPNSVFVC. Residues 43 to 48 constitute a cross-link (lanthionine (Ser-Cys)); the sequence is SVFVCC.

It belongs to the type A lantibiotic family. In terms of processing, maturation of lantibiotics involves the enzymatic conversion of Thr, and Ser into dehydrated AA and the formation of thioether bonds with cysteine. This is followed by membrane translocation and cleavage of the modified precursor.

Lanthionine-containing peptide antibiotic (lantibiotic) active on Gram-positive bacteria. The bactericidal activity of lantibiotics is based on depolarization of energized bacterial cytoplasmic membranes, initiated by the formation of aqueous transmembrane pores. The protein is Lantibiotic salivaricin-A (salA) of Streptococcus salivarius.